Reading from the N-terminus, the 160-residue chain is Transcription antitermination protein NusB (160 aa).

The protein belongs to the NusB family.

Involved in transcription antitermination. Required for transcription of ribosomal RNA (rRNA) genes. Binds specifically to the boxA antiterminator sequence of the ribosomal RNA (rrn) operons. This Mycolicibacterium smegmatis (strain ATCC 700084 / mc(2)155) (Mycobacterium smegmatis) protein is Transcription antitermination protein NusB.